The sequence spans 106 residues: uncharacterized protein (106 aa).

It to the N-terminal of E.carotovora exoenzyme regulation regulon ORF1. The C-terminal part is colinear with YqcB. To E.coli YqcC.

This is an uncharacterized protein from Haemophilus influenzae (strain ATCC 51907 / DSM 11121 / KW20 / Rd).